A 187-amino-acid chain; its full sequence is Elongation factor P (187 aa).

It belongs to the elongation factor P family.

It localises to the cytoplasm. It participates in protein biosynthesis; polypeptide chain elongation. Its function is as follows. Involved in peptide bond synthesis. Stimulates efficient translation and peptide-bond synthesis on native or reconstituted 70S ribosomes in vitro. Probably functions indirectly by altering the affinity of the ribosome for aminoacyl-tRNA, thus increasing their reactivity as acceptors for peptidyl transferase. This Mycoplasmopsis agalactiae (strain NCTC 10123 / CIP 59.7 / PG2) (Mycoplasma agalactiae) protein is Elongation factor P.